The chain runs to 988 residues: UvrABC system protein A (988 aa).

33–40 (GLSGSGKS) is an ATP binding site. The C4-type zinc finger occupies 255–282 (CPVCDYSLPELEPRLFSFNAPVGACPSC). 2 ABC transporter domains span residues 312 to 589 (WDRR…PRSL) and 609 to 938 (PNPK…QFLA). 642–649 (GVSGSGKS) lines the ATP pocket. The C4-type zinc finger occupies 741–767 (CEACQGDGMIKVEMHFLPDVYVPCDVC). The segment at 948-988 (ETRPAAMANKPDARPPRKVKPEKVAKATKTATKKTAKKKAS) is disordered. Over residues 958-972 (PDARPPRKVKPEKVA) the composition is skewed to basic and acidic residues. Positions 978-988 (ATKKTAKKKAS) are enriched in basic residues.

Belongs to the ABC transporter superfamily. UvrA family. As to quaternary structure, forms a heterotetramer with UvrB during the search for lesions.

It is found in the cytoplasm. Functionally, the UvrABC repair system catalyzes the recognition and processing of DNA lesions. UvrA is an ATPase and a DNA-binding protein. A damage recognition complex composed of 2 UvrA and 2 UvrB subunits scans DNA for abnormalities. When the presence of a lesion has been verified by UvrB, the UvrA molecules dissociate. The sequence is that of UvrABC system protein A from Xanthomonas campestris pv. campestris (strain ATCC 33913 / DSM 3586 / NCPPB 528 / LMG 568 / P 25).